The primary structure comprises 115 residues: Peptidyl-tRNA hydrolase (115 aa).

Belongs to the PTH2 family.

The protein localises to the cytoplasm. The enzyme catalyses an N-acyl-L-alpha-aminoacyl-tRNA + H2O = an N-acyl-L-amino acid + a tRNA + H(+). Its function is as follows. The natural substrate for this enzyme may be peptidyl-tRNAs which drop off the ribosome during protein synthesis. This chain is Peptidyl-tRNA hydrolase, found in Methanococcoides burtonii (strain DSM 6242 / NBRC 107633 / OCM 468 / ACE-M).